We begin with the raw amino-acid sequence, 59 residues long: Bacteriocin curvacin-A (59 aa).

Positions 1–18 are excised as a propeptide; the sequence is MNNVKELSMTELQTITGG. An intrachain disulfide couples Cys-28 to Cys-33.

It belongs to the bacteriocin class IIA/YGNGV family.

Its subcellular location is the secreted. Bactericidal activity; inhibits closely related Lactobacilli, Listeria monocytogenes and ivanovvi, Enterococcus faecalis, Carnobacterium sp and Brocothrix thermosphacta. The polypeptide is Bacteriocin curvacin-A (curA) (Latilactobacillus curvatus (Lactobacillus curvatus)).